The following is a 364-amino-acid chain: Envelope glycoprotein US27 (364 aa).

Residues 1–36 (MTTSTTTTTNIMLQVSNVTNHTLNSTEIYQLFEYTR) are Virion surface-facing. Residues Asn17, Asn20, and Asn24 are each glycosylated (N-linked (GlcNAc...) asparagine; by host). A helical membrane pass occupies residues 37-57 (FGVWLMCIVGTFLNMLVITTI). At 58–69 (LYYRRKKKSPSD) the chain is on the intravirion side. Residues 70 to 90 (TYICNLAVADLLIVVGLPFFL) form a helical membrane-spanning segment. The Virion surface portion of the chain corresponds to 91 to 103 (EYAKHHPKLSREV). A helical transmembrane segment spans residues 104–124 (VCSGLNACFYICLFAGVCFLI). Over 125 to 150 (NLSMDRYCVIVWGVELNRVRNNKRAT) the chain is Intravirion. Residues 151–171 (CWVVIFWILAALMGMPHYLMY) traverse the membrane as a helical segment. Residues 172-188 (SHTNNECVGEFANETSG) lie on the Virion surface side of the membrane. A helical transmembrane segment spans residues 189 to 209 (WFPVFLNTKVNICGYLAPIVL). At 210-234 (MAYTYNRMVRFIINYVGKWHMQTLH) the chain is on the intravirion side. A helical membrane pass occupies residues 235 to 255 (VLLVVVVSFASFWFPFNLALF). The Virion surface segment spans residues 256–279 (LESIRLLSGTQNETLQTVITFCLY). Residues 280-300 (VGQFLAYVRACLNPGIYILVG) form a helical membrane-spanning segment. Residues 301-364 (TQMRKDMWTT…MESGEEEFLL (64 aa)) are Intravirion-facing. The interval 344-364 (KRTHYDRKHAPMESGEEEFLL) is disordered.

This sequence belongs to the G-protein coupled receptor 1 family. Heterodimerizes with US28.

It localises to the virion. The protein resides in the host cell membrane. Functionally, plays an important role in spread of HCMV via the extracellular route. As a G-protein-coupled receptor (vGPCR), may activate signaling pathways important for virion assembly or egress processes. The sequence is that of Envelope glycoprotein US27 (US27) from Homo sapiens (Human).